The sequence spans 429 residues: Glucose-1-phosphate adenylyltransferase (429 aa).

Alpha-D-glucose 1-phosphate contacts are provided by residues G162, 177–178 (EK), and S209.

It belongs to the bacterial/plant glucose-1-phosphate adenylyltransferase family. In terms of assembly, homotetramer.

It carries out the reaction alpha-D-glucose 1-phosphate + ATP + H(+) = ADP-alpha-D-glucose + diphosphate. It participates in glycan biosynthesis; glycogen biosynthesis. With respect to regulation, activated by 3-phosphoglycerate and inhibited by phosphate. Functionally, involved in the biosynthesis of ADP-glucose, a building block required for the elongation reactions to produce glycogen. Catalyzes the reaction between ATP and alpha-D-glucose 1-phosphate (G1P) to produce pyrophosphate and ADP-Glc. The protein is Glucose-1-phosphate adenylyltransferase of Nostoc sp. (strain PCC 7120 / SAG 25.82 / UTEX 2576).